We begin with the raw amino-acid sequence, 176 residues long: 3-hydroxydecanoyl-[acyl-carrier-protein] dehydratase (176 aa).

The active site involves histidine 70.

The protein belongs to the thioester dehydratase family. FabA subfamily. Homodimer.

The protein localises to the cytoplasm. The enzyme catalyses a (3R)-hydroxyacyl-[ACP] = a (2E)-enoyl-[ACP] + H2O. The catalysed reaction is (3R)-hydroxydecanoyl-[ACP] = (2E)-decenoyl-[ACP] + H2O. It carries out the reaction (2E)-decenoyl-[ACP] = (3Z)-decenoyl-[ACP]. It functions in the pathway lipid metabolism; fatty acid biosynthesis. Necessary for the introduction of cis unsaturation into fatty acids. Catalyzes the dehydration of (3R)-3-hydroxydecanoyl-ACP to E-(2)-decenoyl-ACP and then its isomerization to Z-(3)-decenoyl-ACP. Can catalyze the dehydratase reaction for beta-hydroxyacyl-ACPs with saturated chain lengths up to 16:0, being most active on intermediate chain length. This Alkalilimnicola ehrlichii (strain ATCC BAA-1101 / DSM 17681 / MLHE-1) protein is 3-hydroxydecanoyl-[acyl-carrier-protein] dehydratase.